We begin with the raw amino-acid sequence, 168 residues long: Protein-export protein SecB (168 aa).

Positions 1–20 (MTDETAANGENEAGRQSQSS) are disordered.

The protein belongs to the SecB family. As to quaternary structure, homotetramer, a dimer of dimers. One homotetramer interacts with 1 SecA dimer.

Its subcellular location is the cytoplasm. Its function is as follows. One of the proteins required for the normal export of preproteins out of the cell cytoplasm. It is a molecular chaperone that binds to a subset of precursor proteins, maintaining them in a translocation-competent state. It also specifically binds to its receptor SecA. This Rhodospirillum centenum (strain ATCC 51521 / SW) protein is Protein-export protein SecB.